A 130-amino-acid chain; its full sequence is Lipoprotein LpqS (130 aa).

An N-terminal signal peptide occupies residues 1–23 (MVWMRSAIVAVALGVTVAAVAAA). Cys-24 is lipidated: N-palmitoyl cysteine. Cys-24 is lipidated: S-diacylglycerol cysteine.

The protein resides in the cell membrane. May play an essential role in M.tuberculosis replication and survival inside the host cell. The polypeptide is Lipoprotein LpqS (Mycobacterium tuberculosis (strain ATCC 25618 / H37Rv)).